Here is a 300-residue protein sequence, read N- to C-terminus: MEIAGKAVCVFLLLAIIKLRRSEGINRVSANLGHNTVMTCPTRTNISMVTWKINPKTGHQCTLAYRIDKDSTGKTNCSDRINWRSRPDWDQALEIQQVGKADEGNYTCEVVNADGNFHRLYHLTVIVAPRMALYCDDYGNPVCEAETEKSAAEISWVPESNSTPRADSHDNGTVTVVSWFAARSTNGKNPTCIVSHATLNETKSINCSSSYRDLILCIAIILSFLIIITFMAVIYYLKLHGCRFCHRSKPPDIIPTYSSQDDTVEVEPYTTYVQKENVIYNSVSDLTLRQNLPQGQSPAT.

Positions 1–24 (MEIAGKAVCVFLLLAIIKLRRSEG) are cleaved as a signal peptide. Residues 25–124 (INRVSANLGH…GNFHRLYHLT (100 aa)) form the Ig-like V-type domain. The Extracellular segment spans residues 25-213 (INRVSANLGH…SINCSSSYRD (189 aa)). Cystine bridges form between C40–C108 and C143–C192. 6 N-linked (GlcNAc...) asparagine glycosylation sites follow: N45, N76, N105, N171, N200, and N206. The Ig-like C2-type domain maps to 122–206 (HLTVIVAPRM…ATLNETKSIN (85 aa)). Residues 214-234 (LILCIAIILSFLIIITFMAVI) form a helical membrane-spanning segment. Over 235 to 300 (YYLKLHGCRF…NLPQGQSPAT (66 aa)) the chain is Cytoplasmic.

The protein belongs to the CD200R family. In terms of processing, glycosylated. Post-translationally, phosphorylated. Highly expressed in macrophages, peripheral blood lymphocytes (PBL) and peripheral blood mononuclear cells (PBMC). Weakly expressed in bursa, thymus, spleen, liver and brain.

The protein localises to the membrane. Its subcellular location is the secreted. This is Cell surface glycoprotein CD200 receptor 1-A (CD200R1A) from Gallus gallus (Chicken).